The sequence spans 438 residues: PHAF1 protein CG7083 (438 aa).

The protein belongs to the PHAF1 family.

Its subcellular location is the cytoplasm. It is found in the preautophagosomal structure. In terms of biological role, may play a regulatory role in autophagic activity. This is PHAF1 protein CG7083 from Drosophila melanogaster (Fruit fly).